The chain runs to 160 residues: Ribosome maturation factor RimP (160 aa).

It belongs to the RimP family.

Its subcellular location is the cytoplasm. Its function is as follows. Required for maturation of 30S ribosomal subunits. In Geobacter sp. (strain M21), this protein is Ribosome maturation factor RimP.